We begin with the raw amino-acid sequence, 31 residues long: MESFAYILILAFSIGTLFFAIALRDPPKIGK.

The chain crosses the membrane as a helical span at residues 3–23 (SFAYILILAFSIGTLFFAIAL).

The protein belongs to the PsbT family. As to quaternary structure, PSII is composed of 1 copy each of membrane proteins PsbA, PsbB, PsbC, PsbD, PsbE, PsbF, PsbH, PsbI, PsbJ, PsbK, PsbL, PsbM, PsbT, PsbX, PsbY, PsbZ, Psb30/Ycf12, peripheral proteins PsbO, CyanoQ (PsbQ), PsbU, PsbV and a large number of cofactors. It forms dimeric complexes.

It localises to the cellular thylakoid membrane. Found at the monomer-monomer interface of the photosystem II (PS II) dimer, plays a role in assembly and dimerization of PSII. PSII is a light-driven water plastoquinone oxidoreductase, using light energy to abstract electrons from H(2)O, generating a proton gradient subsequently used for ATP formation. This chain is Photosystem II reaction center protein T, found in Synechococcus sp. (strain RCC307).